The following is a 180-amino-acid chain: MPPPSRSRINKTRTLGIVGTAIAVLVTSYYIYQKVTSAKEDNGARPPEGDSVKENKKARKSKCIIMSKSIQGLPIKWEEYAADEVVLLVPTSHTDGSMKQAIGDAFRKTKNEHKIIYCDSMDGLWSCVRRLGKFQCILNSRDFTSSGGSDAAVVPEDIGRFVKFVVDSDVEDVLIDTLCN.

Residues 15 to 32 (LGIVGTAIAVLVTSYYIY) form a helical membrane-spanning segment.

Belongs to the peroxin-22 family.

The protein localises to the peroxisome membrane. Its function is as follows. Involved in peroxisome biogenesis. This chain is Peroxisome assembly protein 22 (PEX22), found in Saccharomyces cerevisiae (strain ATCC 204508 / S288c) (Baker's yeast).